Here is a 312-residue protein sequence, read N- to C-terminus: tRNA-dihydrouridine(16) synthase (312 aa).

Residues 7–9 (PME) and Gln-68 each bind FMN. The Proton donor role is filled by Cys-98. FMN-binding positions include Lys-139, 200 to 202 (NGE), and 224 to 225 (GR).

Belongs to the Dus family. DusC subfamily. Requires FMN as cofactor.

The enzyme catalyses 5,6-dihydrouridine(16) in tRNA + NADP(+) = uridine(16) in tRNA + NADPH + H(+). It carries out the reaction 5,6-dihydrouridine(16) in tRNA + NAD(+) = uridine(16) in tRNA + NADH + H(+). In terms of biological role, catalyzes the synthesis of 5,6-dihydrouridine (D), a modified base found in the D-loop of most tRNAs, via the reduction of the C5-C6 double bond in target uridines. Specifically modifies U16 in tRNAs. This chain is tRNA-dihydrouridine(16) synthase, found in Yersinia pestis.